A 186-amino-acid polypeptide reads, in one-letter code: Imidazoleglycerol-phosphate dehydratase (186 aa).

Belongs to the imidazoleglycerol-phosphate dehydratase family.

It is found in the cytoplasm. The catalysed reaction is D-erythro-1-(imidazol-4-yl)glycerol 3-phosphate = 3-(imidazol-4-yl)-2-oxopropyl phosphate + H2O. It participates in amino-acid biosynthesis; L-histidine biosynthesis; L-histidine from 5-phospho-alpha-D-ribose 1-diphosphate: step 6/9. The protein is Imidazoleglycerol-phosphate dehydratase of Dictyoglomus thermophilum (strain ATCC 35947 / DSM 3960 / H-6-12).